Consider the following 136-residue polypeptide: Large ribosomal subunit protein uL16 (136 aa).

The protein belongs to the universal ribosomal protein uL16 family. Part of the 50S ribosomal subunit.

Functionally, binds 23S rRNA and is also seen to make contacts with the A and possibly P site tRNAs. This Rickettsia africae (strain ESF-5) protein is Large ribosomal subunit protein uL16.